The sequence spans 165 residues: Cathelicidin-7 (165 aa).

The N-terminal stretch at 1 to 29 is a signal peptide; that stretch reads METQRASFSLGRSSLWLLLLGLVVPSASA. Residues 30–130 constitute a propeptide that is removed on maturation; sequence QDLSYREAVL…FDITCNNIQS (101 aa). 2 cysteine pairs are disulfide-bonded: Cys86–Cys97 and Cys108–Cys125. Arg164 carries the arginine amide modification.

Belongs to the cathelicidin family. Expressed in bone marrow myeloid cells, spleen and testis.

The protein localises to the secreted. In terms of biological role, exerts a potent antimicrobial activity. The sequence is that of Cathelicidin-7 (CATHL7) from Bos taurus (Bovine).